Reading from the N-terminus, the 144-residue chain is Hexon-interlacing protein (144 aa).

Residues 106-133 (LTVMLAKLETLTAQLEELSQKVEELADA) are a coiled coil.

The protein belongs to the adenoviridae hexon-interlacing protein family. In terms of assembly, homotrimer. Interacts with hexon protein; this interaction tethers the hexons together. Self-interacts with adjacent proteins. Interacts with kinesin light chain KLC1; this interaction leads to capsid disruption at the nuclear pore complex during virus entry into host cell.

It localises to the virion. The protein resides in the host nucleus. Functionally, structural component of the virion that acts as a cement protein on the capsid exterior and forms triskelion structures consisting of three molecules that stabilize three hexon trimers at the center of each icosahedral facet and fixes the peripentonal hexons. Dispensable for assembly. During virus entry, recruits the anterograde motor kinesin-1 to the capsid docked at the nuclear pore complex thereby subjecting the docked capsid to a pulling force. The resulting tension leads to capsid disruption, dispersion of capsid fragments toward cell periphery and eventually viral DNA entry into the host nucleus. This Homo sapiens (Human) protein is Hexon-interlacing protein.